We begin with the raw amino-acid sequence, 543 residues long: Cytochrome P450 monooxygenase 205 (543 aa).

Residues 9–29 (LISLGVAALAVAVWKAIVMVI) traverse the membrane as a helical segment. N-linked (GlcNAc...) asparagine glycans are attached at residues N332 and N434. C479 is a heme binding site.

The protein belongs to the cytochrome P450 family. Heme is required as a cofactor.

Its subcellular location is the membrane. It participates in secondary metabolite biosynthesis. Functionally, cytochrome P450 monooxygenase that is able to use carbazole and phenanthrene as substrates for oxidation. The chain is Cytochrome P450 monooxygenase 205 from Postia placenta (strain ATCC 44394 / Madison 698-R) (Brown rot fungus).